The chain runs to 233 residues: 2-C-methyl-D-erythritol 4-phosphate cytidylyltransferase (233 aa).

This sequence belongs to the IspD/TarI cytidylyltransferase family. IspD subfamily.

It carries out the reaction 2-C-methyl-D-erythritol 4-phosphate + CTP + H(+) = 4-CDP-2-C-methyl-D-erythritol + diphosphate. The protein operates within isoprenoid biosynthesis; isopentenyl diphosphate biosynthesis via DXP pathway; isopentenyl diphosphate from 1-deoxy-D-xylulose 5-phosphate: step 2/6. Catalyzes the formation of 4-diphosphocytidyl-2-C-methyl-D-erythritol from CTP and 2-C-methyl-D-erythritol 4-phosphate (MEP). This Thiobacillus denitrificans (strain ATCC 25259 / T1) protein is 2-C-methyl-D-erythritol 4-phosphate cytidylyltransferase.